A 201-amino-acid polypeptide reads, in one-letter code: ATP-dependent Clp protease proteolytic subunit 2 (201 aa).

Ser100 functions as the Nucleophile in the catalytic mechanism. His125 is an active-site residue.

It belongs to the peptidase S14 family. Fourteen ClpP subunits assemble into 2 heptameric rings which stack back to back to give a disk-like structure with a central cavity, resembling the structure of eukaryotic proteasomes.

The protein resides in the cytoplasm. It catalyses the reaction Hydrolysis of proteins to small peptides in the presence of ATP and magnesium. alpha-casein is the usual test substrate. In the absence of ATP, only oligopeptides shorter than five residues are hydrolyzed (such as succinyl-Leu-Tyr-|-NHMec, and Leu-Tyr-Leu-|-Tyr-Trp, in which cleavage of the -Tyr-|-Leu- and -Tyr-|-Trp bonds also occurs).. Functionally, cleaves peptides in various proteins in a process that requires ATP hydrolysis. Has a chymotrypsin-like activity. Plays a major role in the degradation of misfolded proteins. The polypeptide is ATP-dependent Clp protease proteolytic subunit 2 (Corynebacterium glutamicum (strain ATCC 13032 / DSM 20300 / JCM 1318 / BCRC 11384 / CCUG 27702 / LMG 3730 / NBRC 12168 / NCIMB 10025 / NRRL B-2784 / 534)).